A 776-amino-acid chain; its full sequence is Disintegrin and metalloproteinase domain-containing protein 7 (776 aa).

An N-terminal signal peptide occupies residues 1 to 23; that stretch reads MLPGCIFLMILLILQVKEKVILG. The propeptide occupies 24–176; it reads VEGQQLVYPK…NYSCTELNFT (153 aa). The Extracellular portion of the chain corresponds to 26-669; the sequence is GQQLVYPKKL…WEETLNVTNV (644 aa). N-linked (GlcNAc...) asparagine glycosylation is found at Asn84, Asn167, and Asn174. Positions 199 to 394 constitute a Peptidase M12B domain; the sequence is KYIELFIVAD…YKPTCMLNIP (196 aa). Cystine bridges form between Cys310/Cys389, Cys350/Cys373, Cys352/Cys357, and Cys460/Cys480. Positions 402 to 488 constitute a Disintegrin domain; the sequence is FQFCGNKKLD…ACPKDQFRVN (87 aa). N-linked (GlcNAc...) asparagine glycosylation is found at Asn584, Asn629, and Asn665. Residues 670–690 form a helical membrane-spanning segment; the sequence is AILIVVLVLVIVGIGVLILLI. The Cytoplasmic segment spans residues 691–776; the sequence is RYQKCIKLKQ…GIADPNQSAK (86 aa). Residues 757-776 are disordered; that stretch reads TLKPASKDSRGIADPNQSAK.

Interacts with ITM2B in sperm; the interaction increases following capacitation. Interacts with HSPA5 and CANX.

It is found in the membrane. Its function is as follows. Required for normal male fertility via maintenance of epithelial cell morphology in the caput epididymis and subsequently correct epididymis lumen structure required for sperm development. Plays a role in sperm motility, flagella morphology and tyrosine phosphorylation during sperm capacitance. Plays a role in normal expression levels of HSPA5, ITM2B and ADAM2 in sperm both prior to and post-capacitation. This is a non catalytic metalloprotease-like protein. This chain is Disintegrin and metalloproteinase domain-containing protein 7 (ADAM7), found in Macaca fascicularis (Crab-eating macaque).